The chain runs to 507 residues: Histidine ammonia-lyase (507 aa).

Residues 145-147 (ASG) constitute a cross-link (5-imidazolinone (Ala-Gly)). Residue S146 is modified to 2,3-didehydroalanine (Ser).

Belongs to the PAL/histidase family. In terms of processing, contains an active site 4-methylidene-imidazol-5-one (MIO), which is formed autocatalytically by cyclization and dehydration of residues Ala-Ser-Gly.

Its subcellular location is the cytoplasm. It carries out the reaction L-histidine = trans-urocanate + NH4(+). The protein operates within amino-acid degradation; L-histidine degradation into L-glutamate; N-formimidoyl-L-glutamate from L-histidine: step 1/3. This Treponema denticola (strain ATCC 35405 / DSM 14222 / CIP 103919 / JCM 8153 / KCTC 15104) protein is Histidine ammonia-lyase.